Reading from the N-terminus, the 417-residue chain is Phosphoglycerate kinase 2 (417 aa).

At S2 the chain carries N-acetylserine. Phosphoserine is present on residues S2 and S4. K11 bears the N6-acetyllysine mark. Residues V23, D24, F25, N26, Q38, R39, S62, H63, G65, and R66 each contribute to the (2R)-3-phosphoglycerate site. Residues K75, K86, and K97 each carry the N6-acetyllysine modification. 2 residues coordinate (2R)-3-phosphoglycerate: L122 and R123. N6-acetyllysine occurs at positions 131 and 146. Positions 170 and 171 each coordinate (2R)-3-phosphoglycerate. Phosphotyrosine is present on Y196. Position 199 is an N6-acetyllysine (K199). Position 214 (G214) interacts with ADP. G214 provides a ligand contact to CDP. A215 and K216 together coordinate AMP. A215 is an ATP binding site. Mg(2+) is bound at residue A215. A218 and D219 together coordinate Mg(2+). D219 contributes to the CDP binding site. Residue K220 coordinates AMP. K220 serves as a coordination point for ATP. G238 contributes to the ADP binding site. CDP is bound at residue G238. An AMP-binding site is contributed by G239. Position 239 (G239) interacts with ATP. An N6-acetyllysine mark is found at K267 and K291. Position 313 (A313) interacts with AMP. Position 313 (A313) interacts with ATP. CDP contacts are provided by G338 and F343. F343 lines the ADP pocket. Residue E344 participates in AMP binding. Residues E344, D375, and T376 each contribute to the ATP site. Mg(2+) is bound at residue D375.

This sequence belongs to the phosphoglycerate kinase family. Monomer. The cofactor is Mg(2+). As to expression, testis specific.

The protein resides in the cytoplasm. It carries out the reaction (2R)-3-phosphoglycerate + ATP = (2R)-3-phospho-glyceroyl phosphate + ADP. It functions in the pathway carbohydrate degradation; glycolysis; pyruvate from D-glyceraldehyde 3-phosphate: step 2/5. Essential for sperm motility and male fertility but is not required for the completion of spermatogenesis. In Sus scrofa (Pig), this protein is Phosphoglycerate kinase 2.